The following is a 298-amino-acid chain: N-acetylmuramic acid 6-phosphate etherase (298 aa).

The 164-residue stretch at 54–217 folds into the SIS domain; that stretch reads CISAIKNHGR…STVTMIKLGK (164 aa). Glu-82 functions as the Proton donor in the catalytic mechanism. Residue Glu-113 is part of the active site.

Belongs to the GCKR-like family. MurNAc-6-P etherase subfamily. In terms of assembly, homodimer.

The enzyme catalyses N-acetyl-D-muramate 6-phosphate + H2O = N-acetyl-D-glucosamine 6-phosphate + (R)-lactate. Its pathway is amino-sugar metabolism; N-acetylmuramate degradation. Its function is as follows. Specifically catalyzes the cleavage of the D-lactyl ether substituent of MurNAc 6-phosphate, producing GlcNAc 6-phosphate and D-lactate. This chain is N-acetylmuramic acid 6-phosphate etherase, found in Petrotoga mobilis (strain DSM 10674 / SJ95).